The following is a 650-amino-acid chain: Histone-lysine N-methyltransferase family member SUVH9 (650 aa).

2 disordered regions span residues 1–24 and 95–129; these read MGSS…KLEP and PVEE…RSSE. A compositionally biased stretch (low complexity) spans 7 to 20; it reads PLDPSLNPSPSLIP. The span at 107–118 shows a compositional bias: polar residues; sequence YSTSDSSPSVAT. Residues 205–352 form the YDG domain; that stretch reads GSIPGVQVGD…FGVFKYRLER (148 aa). The 59-residue stretch at 432–490 folds into the Pre-SET domain; sequence SGCDCVNGCGSGCLCEAKNSGEIAYDYNGTLIRQKPLIHECGSACQCPPSCRNRVTQKG. Residues Cys434, Cys436, Cys440, Cys444, Cys446, Cys472, Cys476, Cys478, and Cys482 each contribute to the Zn(2+) site. The SET domain maps to 493–637; the sequence is NRLEVFRSLE…PMTELSLDYG (145 aa).

This sequence belongs to the class V-like SAM-binding methyltransferase superfamily. Histone-lysine methyltransferase family. Suvar3-9 subfamily. In terms of assembly, component of an RNA-directed DNA methylation (RdDM) complex that contains at least MORC6, MORC1/CRT1, MORC2, SWI3D and SUVH9. Interacts directly with MORC6, MORC2 and MORC1/CRT1. Interacts with SWI3B, SWI3C and SWI3D.

It is found in the nucleus. It localises to the chromosome. The protein localises to the centromere. Histone methyltransferase family member that plays a role in gene silencing. Together with MORC6 and SUVH2, regulates the silencing of some transposable elements (TEs). According to PubMed:19043555, the protein does not bind S-adenosyl-L-methionine and lacks methyltransferase activity. Instead, it may function downstream of DRM2 in RNA-directed DNA methylation, binding to methylated DNA and recruiting DNA-directed RNA polymerase V to chromatin. The chain is Histone-lysine N-methyltransferase family member SUVH9 (SUVH9) from Arabidopsis thaliana (Mouse-ear cress).